Reading from the N-terminus, the 2073-residue chain is Non-reducing polyketide synthase cla3 (2073 aa).

The N-terminal acylcarrier protein transacylase domain (SAT) stretch occupies residues leucine 9–histidine 242. The Ketosynthase family 3 (KS3) domain occupies serine 363–glutamate 793. Active-site for beta-ketoacyl synthase activity residues include cysteine 538, histidine 673, and histidine 712. The tract at residues threonine 898–glycine 1198 is malonyl-CoA:ACP transacylase (MAT) domain. Serine 987 serves as the catalytic For acyl/malonyl transferase activity. The segment at serine 1276–glycine 1590 is product template (PT) domain. The segment at alanine 1279–serine 1420 is N-terminal hotdog fold. A PKS/mFAS DH domain is found at alanine 1279–glutamate 1586. Histidine 1311 (proton acceptor; for dehydratase activity) is an active-site residue. The segment at glutamine 1439–glutamate 1586 is C-terminal hotdog fold. The Proton donor; for dehydratase activity role is filled by aspartate 1500. The disordered stretch occupies residues serine 1594 to leucine 1637. The region spanning lysine 1641–valine 1718 is the Carrier domain. Serine 1678 bears the O-(pantetheine 4'-phosphoryl)serine mark. A compositionally biased stretch (polar residues) spans glutamate 1721–valine 1738. The segment at glutamate 1721 to proline 1786 is disordered. The span at proline 1747–leucine 1774 shows a compositional bias: basic and acidic residues. A thioesterase (TE) domain region spans residues phenylalanine 1805–lysine 1950. Histidine 2058 (for thioesterase activity) is an active-site residue.

The protein operates within secondary metabolite biosynthesis. Highly reducing polyketide synthase; part of the gene cluster that mediates the biosynthesis of cladosporin, a tricyclic octaketide that acts as an antimalarial agent though inhibition of the Plasmodium falciparum lysyl-tRNA synthetase. The highly reducing polyketide synthase cla2 is responsible for biosynthesis up to the pentaketide stage, including of the tetrahydropyran (THP) ring, whereas the three subsequent ketide extensions with no reduction are catalyzed by the non-reducing polyketide synthase cla3. This is Non-reducing polyketide synthase cla3 from Cladosporium cladosporioides.